A 189-amino-acid chain; its full sequence is Stathmin-4 (189 aa).

2 S-palmitoyl cysteine lipidation sites follow: Cys20 and Cys22. One can recognise an SLD domain in the interval 48 to 189 (SDMEVIELNK…NKELKEEASR (142 aa)). 2 positions are modified to phosphoserine: Glu54 and Ser90. Positions 90–189 (SLEEIQKKLE…NKELKEEASR (100 aa)) form a coiled coil. Positions 168–189 (QEKDKHAEEVRKNKELKEEASR) are disordered.

Belongs to the stathmin family. Nervous tissue.

It is found in the golgi apparatus. The protein localises to the cell projection. It localises to the growth cone. The protein resides in the axon. Functionally, exhibits microtubule-destabilizing activity. The sequence is that of Stathmin-4 (Stmn4) from Rattus norvegicus (Rat).